The primary structure comprises 354 residues: Uroporphyrinogen decarboxylase (354 aa).

Substrate-binding positions include 27–31 (RQAGR), Asp77, Tyr154, Thr209, and His327.

Belongs to the uroporphyrinogen decarboxylase family. In terms of assembly, homodimer.

It localises to the cytoplasm. The catalysed reaction is uroporphyrinogen III + 4 H(+) = coproporphyrinogen III + 4 CO2. Its pathway is porphyrin-containing compound metabolism; protoporphyrin-IX biosynthesis; coproporphyrinogen-III from 5-aminolevulinate: step 4/4. Functionally, catalyzes the decarboxylation of four acetate groups of uroporphyrinogen-III to yield coproporphyrinogen-III. This chain is Uroporphyrinogen decarboxylase, found in Salmonella paratyphi B (strain ATCC BAA-1250 / SPB7).